A 262-amino-acid chain; its full sequence is Small ribosomal subunit protein eS1 (262 aa).

A compositionally biased stretch (basic residues) spans 1–18; it reads MAVGKNKRISKGKKGSKK. Residues 1 to 20 are disordered; sequence MAVGKNKRISKGKKGSKKKT.

The protein belongs to the eukaryotic ribosomal protein eS1 family. In terms of assembly, component of the small ribosomal subunit. Mature ribosomes consist of a small (40S) and a large (60S) subunit. The 40S subunit contains about 33 different proteins and 1 molecule of RNA (18S). The 60S subunit contains about 49 different proteins and 3 molecules of RNA (25S, 5.8S and 5S).

Its subcellular location is the cytoplasm. The protein is Small ribosomal subunit protein eS1 of Oryza sativa subsp. japonica (Rice).